Here is a 383-residue protein sequence, read N- to C-terminus: Anhydro-N-acetylmuramic acid kinase (383 aa).

Residue 9–16 (GTSVDSID) participates in ATP binding.

The protein belongs to the anhydro-N-acetylmuramic acid kinase family.

It carries out the reaction 1,6-anhydro-N-acetyl-beta-muramate + ATP + H2O = N-acetyl-D-muramate 6-phosphate + ADP + H(+). Its pathway is amino-sugar metabolism; 1,6-anhydro-N-acetylmuramate degradation. It functions in the pathway cell wall biogenesis; peptidoglycan recycling. Catalyzes the specific phosphorylation of 1,6-anhydro-N-acetylmuramic acid (anhMurNAc) with the simultaneous cleavage of the 1,6-anhydro ring, generating MurNAc-6-P. Is required for the utilization of anhMurNAc either imported from the medium or derived from its own cell wall murein, and thus plays a role in cell wall recycling. This Crocosphaera subtropica (strain ATCC 51142 / BH68) (Cyanothece sp. (strain ATCC 51142)) protein is Anhydro-N-acetylmuramic acid kinase.